A 144-amino-acid polypeptide reads, in one-letter code: Antigenic protein SchS21 (144 aa).

A glycan (N-linked (GlcNAc...) asparagine) is linked at asparagine 36. The tract at residues 91 to 105 is igE-binding epitope; that stretch reads VKQMWPAESRKPMSG.

In terms of assembly, homodimer. The cofactor is Mg(2+).

It is found in the secreted. Its function is as follows. Has exodeoxyribonuclease activity with lambda-DNA and salmon testes dsDNA. No activity with circular plasmid DNA. The physiological role of this enzyme may be to degrade environmental DNA, and thus mobilize nitrogen for uptake. The sequence is that of Antigenic protein SchS21 from Stachybotrys chartarum (Toxic black mold).